A 75-amino-acid chain; its full sequence is CDC42 small effector protein 2-C (75 aa).

S-palmitoyl cysteine attachment occurs at residues cysteine 10 and cysteine 11. The region spanning 29 to 42 (IGEPMNFVHTAHVG) is the CRIB domain.

The protein belongs to the CDC42SE/SPEC family.

It is found in the cytoplasm. It localises to the cytoskeleton. Its subcellular location is the cell membrane. Probably involved in the organization of the actin cytoskeleton by acting downstream of CDC42, inducing actin filament assembly. In Xenopus laevis (African clawed frog), this protein is CDC42 small effector protein 2-C (cdc42se2-c).